Reading from the N-terminus, the 149-residue chain is Large ribosomal subunit protein bL9 (149 aa).

Belongs to the bacterial ribosomal protein bL9 family.

Its function is as follows. Binds to the 23S rRNA. The protein is Large ribosomal subunit protein bL9 of Salmonella agona (strain SL483).